The sequence spans 214 residues: Large ribosomal subunit protein uL3 (214 aa).

Residues 133–153 (GRATHGNSRSHNVPGSIGMAQ) are disordered. Gln-153 is subject to N5-methylglutamine.

This sequence belongs to the universal ribosomal protein uL3 family. As to quaternary structure, part of the 50S ribosomal subunit. Forms a cluster with proteins L14 and L19. Post-translationally, methylated by PrmB.

Functionally, one of the primary rRNA binding proteins, it binds directly near the 3'-end of the 23S rRNA, where it nucleates assembly of the 50S subunit. This is Large ribosomal subunit protein uL3 from Cupriavidus metallidurans (strain ATCC 43123 / DSM 2839 / NBRC 102507 / CH34) (Ralstonia metallidurans).